Here is a 334-residue protein sequence, read N- to C-terminus: GTP 3',8-cyclase (334 aa).

A Radical SAM core domain is found at 11–235 (GFNRKVDYLR…VESAESSQGP (225 aa)). R20 is a GTP binding site. Positions 27 and 31 each coordinate [4Fe-4S] cluster. Position 33 (Y33) interacts with S-adenosyl-L-methionine. [4Fe-4S] cluster is bound at residue C34. Residue R69 participates in GTP binding. G73 lines the S-adenosyl-L-methionine pocket. GTP is bound at residue T100. S124 provides a ligand contact to S-adenosyl-L-methionine. Residue K161 coordinates GTP. M195 contacts S-adenosyl-L-methionine. C260 and C263 together coordinate [4Fe-4S] cluster. 265 to 267 (RVR) provides a ligand contact to GTP. Position 277 (C277) interacts with [4Fe-4S] cluster.

It belongs to the radical SAM superfamily. MoaA family. As to quaternary structure, monomer and homodimer. It depends on [4Fe-4S] cluster as a cofactor.

It carries out the reaction GTP + AH2 + S-adenosyl-L-methionine = (8S)-3',8-cyclo-7,8-dihydroguanosine 5'-triphosphate + 5'-deoxyadenosine + L-methionine + A + H(+). It functions in the pathway cofactor biosynthesis; molybdopterin biosynthesis. Functionally, catalyzes the cyclization of GTP to (8S)-3',8-cyclo-7,8-dihydroguanosine 5'-triphosphate. The sequence is that of GTP 3',8-cyclase from Pseudomonas entomophila (strain L48).